We begin with the raw amino-acid sequence, 803 residues long: MASIVMKSQHSLGYPNIGNINRSDYDSYEQQYNNPTGSKQYNNNNNNNTNTNEINNGTNTNLNPNNMYGMYNNNNNNNNNNNNNNNNNNNNNNSNNNNNNNNNNNINNNNNNNNNNNNNNNNNNQHLSQSQQLSPTPYSSNSFSKLLSRSTNDLMLDQDDPSKKKRKRTSPDQLKLLEKIFMAHQHPNLNLRSQLAVELHMTARSVQIWFQNRRAKARNMEFKPQLSHGGSDLIYNALGSQNGMNSMGGGGGNGGGNGGGGMNGINNILNGNHNRNLNKYIPHGGNSINGNMGGGGGGGGGSHNHHHHNHNHNHHNHNHNHNHNQPLSNGDCGEKFSVASAWNKILLHPNNIDFLIRYNPDDPNSIDVNARDSKGLSLLFTAAFLGYEYQVRRLIESGANPNIKDNQGNTPLIAASVLGNQPIVELLLEHRADPNLVNDEGVSPLFSACKGGHLQIASSLLDHDAEVSVKTKINGETPLHIASLKGFEKICKLLIETEAKASVIDSNNRTPLHHACIMGYFSIAKLLICNGADMNAIDIDGHTPLHTSSLMGHDLITRLLLENGADPNIQDSEGYTPIHYAVRESRIETVKFLIKFNSKLNIKTKNGQNLIHLSVQFASLMMGQMIFESKGCEIAADDSDDQGYTPLYLAAKAGKTNFVKYLLSKGASKKIALEKLIQENQDKEIIQMLESTVTKSSNNNNSNSNINNINNINNINNINSQPNTNSDNNNNNNNNNFNENYSNGNNEQSQPPGNKFEEDDEDDFYDRVYKKSYTNRIISNSFSYQQKLNSGNGISVNSGNLED.

Positions Ser23–Tyr41 are enriched in polar residues. The segment at Ser23 to Ser144 is disordered. Residues Asn42–Asn124 are compositionally biased toward low complexity. A compositionally biased stretch (polar residues) spans Gln125–Tyr138. Residues Ser162–Glu221 constitute a DNA-binding region (homeobox). The interval Ile288–Gly330 is disordered. The span at Asn291 to Ser302 shows a compositional bias: gly residues. The span at His303–Asn322 shows a compositional bias: basic residues. 9 ANK repeats span residues Lys374–Ile403, Gln407–Leu436, Glu440–Val469, Asn474–Val503, Asn507–Ala536, Asp540–Ile569, Glu573–Ile602, Asn606–Ala636, and Gln642–Ile671. The disordered stretch occupies residues Lys695–Asp760. Low complexity predominate over residues Ser696–Asn746.

It localises to the nucleus. Functionally, putative transcription factor, that seems to be involved in anterior-posterior patterning of the slug, probably by controlling the proportions of prestalk and prespore cells. This is Homeobox protein Wariai (warA) from Dictyostelium discoideum (Social amoeba).